The chain runs to 55 residues: UPF0291 protein CA_C2726 (55 aa).

It belongs to the UPF0291 family.

The protein localises to the cytoplasm. The protein is UPF0291 protein CA_C2726 of Clostridium acetobutylicum (strain ATCC 824 / DSM 792 / JCM 1419 / IAM 19013 / LMG 5710 / NBRC 13948 / NRRL B-527 / VKM B-1787 / 2291 / W).